We begin with the raw amino-acid sequence, 247 residues long: MPDKNIVEDVIGDLVDNFTETVQKNKHGSSFFEQEDSVSSRFNRLFDRQKPIHHVLGGGKSADVLLWRNKKISASVLMGATAIWVLFEWINFHFLSLVCYALLLGMIAQFVWSNASGFLNRSQSRVPRLVLPKDFFAEVGVAVGKEVNRGLLFLQDLACKGNLKQFLMAVIGLWVAAMVGSCCNFLTVLYIGFVGAHTMPVLYERYEDEVDGFMDSMIMKFHSHYKKLDTGFLSRIPSGKFGLKKRE.

Residues Ser-61 to Glu-247 form the Reticulon domain. The next 3 membrane-spanning stretches (helical) occupy residues Lys-71–Asn-91, Phe-92–Trp-112, and Phe-166–Leu-186.

It localises to the endoplasmic reticulum membrane. The chain is Reticulon-like protein B8 (RTNLB8) from Arabidopsis thaliana (Mouse-ear cress).